The following is an 880-amino-acid chain: Alanine--tRNA ligase (880 aa).

Zn(2+) is bound by residues His-566, His-570, Cys-668, and His-672.

The protein belongs to the class-II aminoacyl-tRNA synthetase family. Zn(2+) is required as a cofactor.

The protein resides in the cytoplasm. The catalysed reaction is tRNA(Ala) + L-alanine + ATP = L-alanyl-tRNA(Ala) + AMP + diphosphate. Functionally, catalyzes the attachment of alanine to tRNA(Ala) in a two-step reaction: alanine is first activated by ATP to form Ala-AMP and then transferred to the acceptor end of tRNA(Ala). Also edits incorrectly charged Ser-tRNA(Ala) and Gly-tRNA(Ala) via its editing domain. The protein is Alanine--tRNA ligase of Parafrankia sp. (strain EAN1pec).